We begin with the raw amino-acid sequence, 507 residues long: Probable cytosol aminopeptidase (507 aa).

Mn(2+) contacts are provided by K269 and D274. Residue K281 is part of the active site. D292, D351, and E353 together coordinate Mn(2+). The active site involves R355.

Belongs to the peptidase M17 family. Requires Mn(2+) as cofactor.

It localises to the cytoplasm. It catalyses the reaction Release of an N-terminal amino acid, Xaa-|-Yaa-, in which Xaa is preferably Leu, but may be other amino acids including Pro although not Arg or Lys, and Yaa may be Pro. Amino acid amides and methyl esters are also readily hydrolyzed, but rates on arylamides are exceedingly low.. The enzyme catalyses Release of an N-terminal amino acid, preferentially leucine, but not glutamic or aspartic acids.. Functionally, presumably involved in the processing and regular turnover of intracellular proteins. Catalyzes the removal of unsubstituted N-terminal amino acids from various peptides. This chain is Probable cytosol aminopeptidase, found in Chromohalobacter salexigens (strain ATCC BAA-138 / DSM 3043 / CIP 106854 / NCIMB 13768 / 1H11).